A 681-amino-acid polypeptide reads, in one-letter code: Potassium-transporting ATPase ATP-binding subunit (681 aa).

Helical transmembrane passes span 30–50 (LLVY…FFGI), 59–79 (LAIA…EAIA), 216–236 (ILLV…LPFT), and 255–275 (IALL…SIGI). The active-site 4-aspartylphosphate intermediate is the D306. Residues D343, E347, 376–383 (FTATTRMS), and K394 contribute to the ATP site. Residues D517 and D521 each contribute to the Mg(2+) site. 3 helical membrane-spanning segments follow: residues 587 to 607 (FAII…LNLM), 615 to 635 (AILS…PLSL), and 661 to 681 (LIAP…LGIV).

The protein belongs to the cation transport ATPase (P-type) (TC 3.A.3) family. Type IA subfamily. As to quaternary structure, the system is composed of three essential subunits: KdpA, KdpB and KdpC.

The protein localises to the cell membrane. The catalysed reaction is K(+)(out) + ATP + H2O = K(+)(in) + ADP + phosphate + H(+). Part of the high-affinity ATP-driven potassium transport (or Kdp) system, which catalyzes the hydrolysis of ATP coupled with the electrogenic transport of potassium into the cytoplasm. This subunit is responsible for energy coupling to the transport system and for the release of the potassium ions to the cytoplasm. The polypeptide is Potassium-transporting ATPase ATP-binding subunit (Listeria monocytogenes serotype 4b (strain CLIP80459)).